Consider the following 173-residue polypeptide: Large ribosomal subunit protein uL16 (173 aa).

It belongs to the universal ribosomal protein uL16 family.

The sequence is that of Large ribosomal subunit protein uL16 from Methanosarcina acetivorans (strain ATCC 35395 / DSM 2834 / JCM 12185 / C2A).